A 199-amino-acid chain; its full sequence is NAD(P)H dehydrogenase (quinone) (199 aa).

Residues 4-190 enclose the Flavodoxin-like domain; sequence VLVLYYSMYG…AIARFQGKHV (187 aa). FMN is bound by residues 10–15 and 79–81; these read SMYGHI and TRF. An NAD(+)-binding site is contributed by Tyr-12. Substrate is bound at residue Trp-99. FMN is bound by residues 114–119 and His-134; that span reads STGTGG.

This sequence belongs to the WrbA family. Requires FMN as cofactor.

The enzyme catalyses a quinone + NADH + H(+) = a quinol + NAD(+). It carries out the reaction a quinone + NADPH + H(+) = a quinol + NADP(+). The polypeptide is NAD(P)H dehydrogenase (quinone) (Marinobacter nauticus (strain ATCC 700491 / DSM 11845 / VT8) (Marinobacter aquaeolei)).